The primary structure comprises 229 residues: Potassium/proton antiporter CemA (229 aa).

Helical transmembrane passes span 7 to 27 (FTPL…SFSV), 107 to 127 (ILHF…SILG), and 189 to 209 (IISG…KYWI).

It belongs to the CemA family.

The protein resides in the plastid. The protein localises to the chloroplast inner membrane. It catalyses the reaction K(+)(in) + H(+)(out) = K(+)(out) + H(+)(in). In terms of biological role, contributes to K(+)/H(+) antiport activity by supporting proton efflux to control proton extrusion and homeostasis in chloroplasts in a light-dependent manner to modulate photosynthesis. Prevents excessive induction of non-photochemical quenching (NPQ) under continuous-light conditions. Indirectly promotes efficient inorganic carbon uptake into chloroplasts. The sequence is that of Potassium/proton antiporter CemA from Atropa belladonna (Belladonna).